We begin with the raw amino-acid sequence, 114 residues long: MRKSYRVKKETEFQQVFETRNSYANRQFVIYVLEKPGQPHFRVGISVGKKIGNAVARNWVKRRIRQSITELKPQLKQDADFLVIARPTVAGKSQAETKAYLSHALKLAHLLDND.

It belongs to the RnpA family. In terms of assembly, consists of a catalytic RNA component (M1 or rnpB) and a protein subunit.

It carries out the reaction Endonucleolytic cleavage of RNA, removing 5'-extranucleotides from tRNA precursor.. In terms of biological role, RNaseP catalyzes the removal of the 5'-leader sequence from pre-tRNA to produce the mature 5'-terminus. It can also cleave other RNA substrates such as 4.5S RNA. The protein component plays an auxiliary but essential role in vivo by binding to the 5'-leader sequence and broadening the substrate specificity of the ribozyme. The chain is Ribonuclease P protein component from Lactiplantibacillus plantarum (strain ATCC BAA-793 / NCIMB 8826 / WCFS1) (Lactobacillus plantarum).